The sequence spans 274 residues: MAIHLYKTSTPSTRNGAVDSQVKSNTRNNLIYGQHRCSKGRNARGIITARHRGGGHKRLYRKIDFRRNEKYIYGRIVTIEYDPNRNAYICLIHYGDGEKRYILHPRGAIIGDTIISGTEVPIKMGNALPLTDMPLGTAIHNIEITLGRGGQLARAAGAVAKLIAKEGKSATLKLPSGEVRLISKNCSATVGQVGNAGVNQKSLGRAGSKCWLGKRPVVRGVVMNPVDHPHGGGEGRAPIGRKKPATPWGYPALGRRSRKRNKYSDNLILRRRSK.

Disordered stretches follow at residues 1–20 (MAIH…AVDS) and 224–274 (NPVD…RRSK).

The protein belongs to the universal ribosomal protein uL2 family. In terms of assembly, part of the 50S ribosomal subunit.

The protein resides in the plastid. The protein localises to the chloroplast. In Populus alba (White poplar), this protein is Large ribosomal subunit protein uL2cy (rpl2-B).